A 447-amino-acid chain; its full sequence is Tubulin beta chain (447 aa).

Residues Gln11, Glu69, Ser138, Gly142, Thr143, Gly144, Asn204, and Asn226 each contribute to the GTP site. Residue Glu69 coordinates Mg(2+). Residues 419 to 447 form a disordered region; that stretch reads VSEYQQYQDATADEEGEYEDEDQEAEDDM. The span at 429-447 shows a compositional bias: acidic residues; that stretch reads TADEEGEYEDEDQEAEDDM.

It belongs to the tubulin family. Dimer of alpha and beta chains. A typical microtubule is a hollow water-filled tube with an outer diameter of 25 nm and an inner diameter of 15 nM. Alpha-beta heterodimers associate head-to-tail to form protofilaments running lengthwise along the microtubule wall with the beta-tubulin subunit facing the microtubule plus end conferring a structural polarity. Microtubules usually have 13 protofilaments but different protofilament numbers can be found in some organisms and specialized cells. Mg(2+) is required as a cofactor.

It localises to the cytoplasm. The protein resides in the cytoskeleton. Its function is as follows. Tubulin is the major constituent of microtubules, a cylinder consisting of laterally associated linear protofilaments composed of alpha- and beta-tubulin heterodimers. Microtubules grow by the addition of GTP-tubulin dimers to the microtubule end, where a stabilizing cap forms. Below the cap, tubulin dimers are in GDP-bound state, owing to GTPase activity of alpha-tubulin. This is Tubulin beta chain (TUBB) from Hordeum vulgare (Barley).